The chain runs to 132 residues: Myelin P2 protein (132 aa).

Position 2 is an N-acetylserine (serine 2). Arginine 107 provides a ligand contact to (9Z)-octadecenoate. Residue arginine 107 participates in hexadecanoate binding. Cysteine 118 and cysteine 125 are oxidised to a cystine. 127-129 serves as a coordination point for (9Z)-octadecenoate; it reads RIY. Position 127–129 (127–129) interacts with hexadecanoate; that stretch reads RIY.

Belongs to the calycin superfamily. Fatty-acid binding protein (FABP) family. Monomer.

It localises to the cytoplasm. Its function is as follows. May play a role in lipid transport protein in Schwann cells. May bind cholesterol. The polypeptide is Myelin P2 protein (Sus scrofa (Pig)).